A 153-amino-acid polypeptide reads, in one-letter code: Arginine repressor (153 aa).

This sequence belongs to the ArgR family.

It localises to the cytoplasm. It functions in the pathway amino-acid biosynthesis; L-arginine biosynthesis [regulation]. In terms of biological role, regulates arginine biosynthesis genes. The protein is Arginine repressor of Clostridium tetani (strain Massachusetts / E88).